Reading from the N-terminus, the 189-residue chain is Chitin synthase 1 (189 aa).

Belongs to the chitin synthase family.

It is found in the cell membrane. It catalyses the reaction [(1-&gt;4)-N-acetyl-beta-D-glucosaminyl](n) + UDP-N-acetyl-alpha-D-glucosamine = [(1-&gt;4)-N-acetyl-beta-D-glucosaminyl](n+1) + UDP + H(+). Polymerizes chitin, a structural polymer of the cell wall and septum, by transferring the sugar moiety of UDP-GlcNAc to the non-reducing end of the growing chitin polymer. The sequence is that of Chitin synthase 1 (CHS1) from Schizophyllum commune (Split gill fungus).